Consider the following 155-residue polypeptide: SsrA-binding protein (155 aa).

This sequence belongs to the SmpB family.

It is found in the cytoplasm. Its function is as follows. Required for rescue of stalled ribosomes mediated by trans-translation. Binds to transfer-messenger RNA (tmRNA), required for stable association of tmRNA with ribosomes. tmRNA and SmpB together mimic tRNA shape, replacing the anticodon stem-loop with SmpB. tmRNA is encoded by the ssrA gene; the 2 termini fold to resemble tRNA(Ala) and it encodes a 'tag peptide', a short internal open reading frame. During trans-translation Ala-aminoacylated tmRNA acts like a tRNA, entering the A-site of stalled ribosomes, displacing the stalled mRNA. The ribosome then switches to translate the ORF on the tmRNA; the nascent peptide is terminated with the 'tag peptide' encoded by the tmRNA and targeted for degradation. The ribosome is freed to recommence translation, which seems to be the essential function of trans-translation. This Streptococcus pyogenes serotype M5 (strain Manfredo) protein is SsrA-binding protein.